The following is a 1283-amino-acid chain: Rab11 family-interacting protein 1 (1283 aa).

The C2 domain occupies 1 to 126; the sequence is MSLMVSAGRG…DQGRRKTQWY (126 aa). Residues 161-185 show a composition bias toward basic and acidic residues; the sequence is SMKDKSRNPFGKLKDKIKGKNKDSG. The tract at residues 161–281 is disordered; the sequence is SMKDKSRNPF…VMSHKRTAST (121 aa). Ser184, Ser202, Ser206, and Ser234 each carry phosphoserine. Over residues 225–239 the composition is skewed to polar residues; the sequence is NLQKTPLSQSMSVLP. The segment covering 257 to 266 has biased composition (acidic residues); the sequence is WDEDDNEDES. Phosphoserine is present on residues Ser300, Ser315, Ser339, Ser341, Ser343, Ser345, Ser356, Ser357, and Ser382. Disordered stretches follow at residues 330–727, 741–782, 835–913, 969–993, and 1037–1141; these read EAKG…QEVP, VGEL…ASVP, PQEL…LFRM, DERI…KSST, and ASVT…RVEN. Basic and acidic residues predominate over residues 419 to 433; sequence ATKEAKESKKPESRR. Position 435 is a phosphoserine (Ser435). Over residues 442–451 the composition is skewed to basic and acidic residues; the sequence is GKKDVAKGSE. The residue at position 477 (Ser477) is a Phosphoserine. The segment covering 482–491 has biased composition (basic and acidic residues); it reads DLVRRSEKDT. A phosphoserine mark is found at Ser529 and Ser545. Over residues 588-612 the composition is skewed to low complexity; it reads SSESPSVFSSLSSPIAAPISTSTPI. Residues 637–652 show a composition bias toward polar residues; it reads QTESLTPVPNSGSSAL. The segment covering 698–715 has biased composition (basic and acidic residues); sequence ETGRQEEELPRFPCKKQD. Residue Ser758 is modified to Phosphoserine. Over residues 855–866 the composition is skewed to basic and acidic residues; the sequence is ESPHAEDSERES. The segment covering 975–986 has biased composition (acidic residues); it reads VEDDGDQVEDDG. Over residues 1037–1048 the composition is skewed to polar residues; it reads ASVTAPSEQTTE. Positions 1116 to 1131 are enriched in basic and acidic residues; the sequence is SDTHHTSTAESQKKAT. A Phosphoserine modification is found at Ser1135. The region spanning 1211–1273 is the FIP-RBD domain; that stretch reads KKYSPSDPAF…EETPNILRIP (63 aa). The tract at residues 1219–1283 is necessary for interaction with RAB4A and RAB11A, subcellular location and endosomal recycling; sequence AFAYAQLTHD…TQVGKKAGKM (65 aa).

As to quaternary structure, interacts with RAB11A (GTP-bound form); the interaction induces RAB11FIP1 recruitment to membranes. Interacts with RAB14 (GTP-bound form). In terms of assembly, homooligomer. Isoform 2 interacts with RAB4A, RAB11A, RAB11B and RAB25. According to PubMed:15280022, RAB4A binding to RAB11FIP1 is of very low affinity in vitro and in vivo. As to expression, isoform 2 is expressed in brain, heart, testis, lung, spleen, ovary and small intestine.

It is found in the recycling endosome. The protein localises to the cytoplasmic vesicle. The protein resides in the phagosome membrane. Its function is as follows. A Rab11 effector protein involved in the endosomal recycling process. Also involved in controlling membrane trafficking along the phagocytic pathway and in phagocytosis. Interaction with RAB14 may function in the process of neurite formation. The protein is Rab11 family-interacting protein 1 of Homo sapiens (Human).